Consider the following 194-residue polypeptide: MLNVRDVLRAYLHGYFPMGDPDDGNVYWCRPRRRAVFPLDTYRASRVVRRLVRDNVFDIQINRDFNAVIAHCAKPRRHESETWISDEIVAVYLELHSLGLAHSVECYADGELAGGLYGIALGGAFFGESMFFRQPNASKVAFDALVRQLKLQRFDLLDAQIMNPHLEFLGAVEIDHEEYMRQLAMALEKKISFL.

This sequence belongs to the L/F-transferase family.

It is found in the cytoplasm. It catalyses the reaction N-terminal L-lysyl-[protein] + L-leucyl-tRNA(Leu) = N-terminal L-leucyl-L-lysyl-[protein] + tRNA(Leu) + H(+). The enzyme catalyses N-terminal L-arginyl-[protein] + L-leucyl-tRNA(Leu) = N-terminal L-leucyl-L-arginyl-[protein] + tRNA(Leu) + H(+). The catalysed reaction is L-phenylalanyl-tRNA(Phe) + an N-terminal L-alpha-aminoacyl-[protein] = an N-terminal L-phenylalanyl-L-alpha-aminoacyl-[protein] + tRNA(Phe). Its function is as follows. Functions in the N-end rule pathway of protein degradation where it conjugates Leu, Phe and, less efficiently, Met from aminoacyl-tRNAs to the N-termini of proteins containing an N-terminal arginine or lysine. In Prosthecochloris aestuarii (strain DSM 271 / SK 413), this protein is Leucyl/phenylalanyl-tRNA--protein transferase.